A 157-amino-acid polypeptide reads, in one-letter code: UPF0587 protein C2D10.03c (157 aa).

C34, C37, C68, and C71 together coordinate Zn(2+).

The protein belongs to the UPF0587 family.

The protein is UPF0587 protein C2D10.03c of Schizosaccharomyces pombe (strain 972 / ATCC 24843) (Fission yeast).